The chain runs to 294 residues: Ribosomal protein L11 methyltransferase (294 aa).

4 residues coordinate S-adenosyl-L-methionine: Thr-145, Gly-167, Asp-189, and Asn-230.

This sequence belongs to the methyltransferase superfamily. PrmA family.

It localises to the cytoplasm. The enzyme catalyses L-lysyl-[protein] + 3 S-adenosyl-L-methionine = N(6),N(6),N(6)-trimethyl-L-lysyl-[protein] + 3 S-adenosyl-L-homocysteine + 3 H(+). Functionally, methylates ribosomal protein L11. This chain is Ribosomal protein L11 methyltransferase, found in Alkalilimnicola ehrlichii (strain ATCC BAA-1101 / DSM 17681 / MLHE-1).